The chain runs to 218 residues: UPF0319 protein PM0395 (218 aa).

The signal sequence occupies residues 1–21 (MKFRFAALASVALLTSTVSVA).

This sequence belongs to the UPF0319 family.

The sequence is that of UPF0319 protein PM0395 from Pasteurella multocida (strain Pm70).